The chain runs to 1414 residues: DNA-directed RNA polymerase subunit beta' (1414 aa).

4 residues coordinate Zn(2+): cysteine 70, cysteine 72, cysteine 85, and cysteine 88. Mg(2+) contacts are provided by aspartate 460, aspartate 462, and aspartate 464. Zn(2+)-binding residues include cysteine 814, cysteine 888, cysteine 895, and cysteine 898. The span at 1392 to 1403 (EQALSEALKSSA) shows a compositional bias: low complexity. The disordered stretch occupies residues 1392 to 1414 (EQALSEALKSSAPQEAKAAQKDE).

This sequence belongs to the RNA polymerase beta' chain family. The RNAP catalytic core consists of 2 alpha, 1 beta, 1 beta' and 1 omega subunit. When a sigma factor is associated with the core the holoenzyme is formed, which can initiate transcription. It depends on Mg(2+) as a cofactor. The cofactor is Zn(2+).

It catalyses the reaction RNA(n) + a ribonucleoside 5'-triphosphate = RNA(n+1) + diphosphate. Its function is as follows. DNA-dependent RNA polymerase catalyzes the transcription of DNA into RNA using the four ribonucleoside triphosphates as substrates. The sequence is that of DNA-directed RNA polymerase subunit beta' from Coxiella burnetii (strain Dugway 5J108-111).